Consider the following 33-residue polypeptide: uncharacterized protein (33 aa).

The segment at 1 to 24 (MRTGTRCDLGELSHPRKTLPPRGM) is disordered.

This is an uncharacterized protein from Treponema pallidum (strain Nichols).